A 147-amino-acid chain; its full sequence is Hemoglobin subunit beta (147 aa).

At valine 2 the chain carries N-acetylvaline. Positions 3 to 147 constitute a Globin domain; it reads HLSGEEKSAV…VANALAHKYH (145 aa). At threonine 13 the chain carries Phosphothreonine. Serine 45 is subject to Phosphoserine. N6-acetyllysine is present on lysine 60. Residue histidine 64 participates in heme b binding. Position 83 is an N6-acetyllysine (lysine 83). A heme b-binding site is contributed by histidine 93. S-nitrosocysteine is present on cysteine 94. Lysine 145 carries the N6-acetyllysine modification.

This sequence belongs to the globin family. As to quaternary structure, heterotetramer of two alpha chains and two beta chains. Red blood cells.

Involved in oxygen transport from the lung to the various peripheral tissues. In Lepus europaeus (European hare), this protein is Hemoglobin subunit beta (HBB).